Reading from the N-terminus, the 474-residue chain is Methylenetetrahydrofolate--tRNA-(uracil-5-)-methyltransferase TrmFO (474 aa).

14 to 19 serves as a coordination point for FAD; sequence GGGLAG.

Belongs to the MnmG family. TrmFO subfamily. The cofactor is FAD.

It is found in the cytoplasm. It catalyses the reaction uridine(54) in tRNA + (6R)-5,10-methylene-5,6,7,8-tetrahydrofolate + NADH + H(+) = 5-methyluridine(54) in tRNA + (6S)-5,6,7,8-tetrahydrofolate + NAD(+). The enzyme catalyses uridine(54) in tRNA + (6R)-5,10-methylene-5,6,7,8-tetrahydrofolate + NADPH + H(+) = 5-methyluridine(54) in tRNA + (6S)-5,6,7,8-tetrahydrofolate + NADP(+). Functionally, catalyzes the folate-dependent formation of 5-methyl-uridine at position 54 (M-5-U54) in all tRNAs. The chain is Methylenetetrahydrofolate--tRNA-(uracil-5-)-methyltransferase TrmFO from Caulobacter vibrioides (strain ATCC 19089 / CIP 103742 / CB 15) (Caulobacter crescentus).